We begin with the raw amino-acid sequence, 110 residues long: UPF0060 membrane protein MT2717 (110 aa).

The next 4 helical transmembrane spans lie at Ile6–Gly26, Gly32–Leu52, Val61–Asp81, and Val90–His110.

It belongs to the UPF0060 family.

The protein resides in the cell membrane. The sequence is that of UPF0060 membrane protein MT2717 from Mycobacterium tuberculosis (strain CDC 1551 / Oshkosh).